The chain runs to 258 residues: Isoprenyl transferase 1 (258 aa).

The active site involves Asp39. Residue Asp39 coordinates Mg(2+). Substrate-binding positions include 40 to 43, Trp44, Arg52, His57, and 85 to 87; these read GNRR and SND. The active-site Proton acceptor is Asn88. Substrate-binding positions include Arg92, Arg207, and 213 to 215; that span reads RLS. A Mg(2+)-binding site is contributed by Glu226.

This sequence belongs to the UPP synthase family. Homodimer. Requires Mg(2+) as cofactor.

In terms of biological role, catalyzes the condensation of isopentenyl diphosphate (IPP) with allylic pyrophosphates generating different type of terpenoids. The chain is Isoprenyl transferase 1 from Tropheryma whipplei (strain TW08/27) (Whipple's bacillus).